The following is a 99-amino-acid chain: NADH-quinone oxidoreductase subunit K (99 aa).

3 helical membrane-spanning segments follow: residues 2–22 (PVEY…LGVL), 28–48 (LILM…FLAF), and 60–80 (IAFF…AVVI).

Belongs to the complex I subunit 4L family. In terms of assembly, NDH-1 is composed of 14 different subunits. Subunits NuoA, H, J, K, L, M, N constitute the membrane sector of the complex.

The protein resides in the cell inner membrane. The enzyme catalyses a quinone + NADH + 5 H(+)(in) = a quinol + NAD(+) + 4 H(+)(out). In terms of biological role, NDH-1 shuttles electrons from NADH, via FMN and iron-sulfur (Fe-S) centers, to quinones in the respiratory chain. The immediate electron acceptor for the enzyme in this species is believed to be ubiquinone. Couples the redox reaction to proton translocation (for every two electrons transferred, four hydrogen ions are translocated across the cytoplasmic membrane), and thus conserves the redox energy in a proton gradient. The chain is NADH-quinone oxidoreductase subunit K from Anaeromyxobacter dehalogenans (strain 2CP-1 / ATCC BAA-258).